A 129-amino-acid chain; its full sequence is Putative F-box protein At3g42722 (129 aa).

One can recognise an F-box domain in the interval 4-50; the sequence is MASIDCLPDELLVGILSFILTNEAASTSILSKRWRTLFAFSHNLDCN.

The polypeptide is Putative F-box protein At3g42722 (Arabidopsis thaliana (Mouse-ear cress)).